The following is an 88-amino-acid chain: MIDKKQKQKIVSEFGKNESDTGSVGVQIALITGRIKYLTEHLKINKKDHSSKRGLLKLVGQRRSLLRYYQKKDLEAYRMLISKLGLRK.

Belongs to the universal ribosomal protein uS15 family. As to quaternary structure, part of the 30S ribosomal subunit. Forms a bridge to the 50S subunit in the 70S ribosome, contacting the 23S rRNA.

In terms of biological role, one of the primary rRNA binding proteins, it binds directly to 16S rRNA where it helps nucleate assembly of the platform of the 30S subunit by binding and bridging several RNA helices of the 16S rRNA. Forms an intersubunit bridge (bridge B4) with the 23S rRNA of the 50S subunit in the ribosome. In Borreliella burgdorferi (strain ATCC 35210 / DSM 4680 / CIP 102532 / B31) (Borrelia burgdorferi), this protein is Small ribosomal subunit protein uS15.